The chain runs to 448 residues: uncharacterized protein (448 aa).

As to expression, component of the acid-insoluble and acid-soluble organic matrix of the aragonitic skeleton (at protein level).

It localises to the secreted. This is an uncharacterized protein from Acropora millepora (Staghorn coral).